The primary structure comprises 164 residues: UPF0114 protein KPK_0696 (164 aa).

A run of 4 helical transmembrane segments spans residues 15–35, 53–73, 109–126, and 136–156; these read LLAP…IKFF, LILT…LVMV, VAAS…RVFM, and LMWY…MGYL.

The protein belongs to the UPF0114 family.

It is found in the cell membrane. The chain is UPF0114 protein KPK_0696 from Klebsiella pneumoniae (strain 342).